The following is a 629-amino-acid chain: Embryonic polyadenylate-binding protein A (629 aa).

4 RRM domains span residues 11 to 89 (ASLY…WSQR), 99 to 175 (GNVF…HFKS), 191 to 268 (TNVY…RAQK), and 294 to 370 (VNLY…LAQR). Residues 539 to 616 (QEPLTASLLA…AVAVLQAHQA (78 aa)) enclose the PABC domain.

It belongs to the polyadenylate-binding protein type-1 family. Interacts with dazl in an RNA-independent manner. The C-terminus can self-associate and also interact with the C-terminus of pabpc1, independently of RNA. RRM 1 and RRM 2 interact with both eif4g1 and paip1, and the C-terminus also interacts with paip1. Prior to oocyte maturation, found in a complex with dazl and pum2 proteins and spdy1 mRNA; pum2 dissociates from the complex during maturation. Interacts with the translation termination factor sup35/erf3. As to expression, expressed in adult testis, but at a reduced level compared to oocytes.

The protein localises to the cytoplasm. Its function is as follows. Binds and protects the poly(A) tail of mRNA with or without an AU-rich element (ARE) and prevents mRNA deadenylation. Stimulates the translation of mRNAs to which it is bound during early development. This Xenopus laevis (African clawed frog) protein is Embryonic polyadenylate-binding protein A (epabp-a).